The primary structure comprises 174 residues: Protein GrpE (174 aa).

Positions M1–A35 are disordered. Residues E17–A35 are compositionally biased toward basic and acidic residues.

It belongs to the GrpE family. In terms of assembly, homodimer.

It localises to the cytoplasm. Participates actively in the response to hyperosmotic and heat shock by preventing the aggregation of stress-denatured proteins, in association with DnaK and GrpE. It is the nucleotide exchange factor for DnaK and may function as a thermosensor. Unfolded proteins bind initially to DnaJ; upon interaction with the DnaJ-bound protein, DnaK hydrolyzes its bound ATP, resulting in the formation of a stable complex. GrpE releases ADP from DnaK; ATP binding to DnaK triggers the release of the substrate protein, thus completing the reaction cycle. Several rounds of ATP-dependent interactions between DnaJ, DnaK and GrpE are required for fully efficient folding. The sequence is that of Protein GrpE from Streptococcus pneumoniae serotype 4 (strain ATCC BAA-334 / TIGR4).